The chain runs to 432 residues: Adenylosuccinate synthetase (432 aa).

Residues 13–19 (GDEGKGK) and 41–43 (GHT) each bind GTP. The active-site Proton acceptor is the D14. Mg(2+)-binding residues include D14 and G41. Residues 14–17 (DEGK), 39–42 (NAGH), T130, R144, Q225, T240, and R304 contribute to the IMP site. Catalysis depends on H42, which acts as the Proton donor. 300-306 (STTGRPR) provides a ligand contact to substrate. GTP contacts are provided by residues R306, 332 to 334 (KLD), and 416 to 418 (STG).

This sequence belongs to the adenylosuccinate synthetase family. As to quaternary structure, homodimer. It depends on Mg(2+) as a cofactor.

Its subcellular location is the cytoplasm. The catalysed reaction is IMP + L-aspartate + GTP = N(6)-(1,2-dicarboxyethyl)-AMP + GDP + phosphate + 2 H(+). It functions in the pathway purine metabolism; AMP biosynthesis via de novo pathway; AMP from IMP: step 1/2. In terms of biological role, plays an important role in the de novo pathway of purine nucleotide biosynthesis. Catalyzes the first committed step in the biosynthesis of AMP from IMP. The protein is Adenylosuccinate synthetase of Nitrosomonas eutropha (strain DSM 101675 / C91 / Nm57).